Here is a 595-residue protein sequence, read N- to C-terminus: Coagulation factor XII (595 aa).

The N-terminal stretch at 1-19 is a signal peptide; sequence MTALLFLGSLLMSLDLTLS. Positions 41–89 constitute a Fibronectin type-II domain; it reads VDGKLCHFPFQYHRRLYHKCIHKGQPGSRPWCATTPNFDEDQQWGYCLE. 13 disulfide bridges follow: Cys46–Cys72, Cys60–Cys87, Cys97–Cys109, Cys103–Cys118, Cys120–Cys129, Cys134–Cys162, Cys160–Cys169, Cys177–Cys188, Cys182–Cys197, Cys199–Cys208, Cys216–Cys294, Cys237–Cys276, and Cys265–Cys289. The 38-residue stretch at 93-130 folds into the EGF-like 1 domain; the sequence is VKDHCSKHSPCHKGGTCVNTPNGPHCLCPEHLTGKHCQ. Thr108 carries O-linked (Fuc) threonine glycosylation. The Fibronectin type-I domain maps to 132–172; sequence EKCFESQLLKFFHENEIWFRTGPGGVARCQCKGPQAVCKLL. The 37-residue stretch at 173–209 folds into the EGF-like 2 domain; it reads TSQVCRVNPCLNGGTCLLVEDHRLCHCPAGYAGPFCD. The Kringle domain maps to 215 to 294; that stretch reads TCYEDRGLSY…SWDYCDLEQC (80 aa). Asn248 is a glycosylation site (N-linked (GlcNAc...) asparagine). An O-linked (GalNAc...) threonine glycan is attached at Thr298. Positions 302–332 are disordered; sequence PVSPESHDMLKPRPPILQSSPRDSTRNQNVV. Ser307 carries an O-linked (GalNAc...) serine glycan. The span at 318-332 shows a compositional bias: polar residues; the sequence is LQSSPRDSTRNQNVV. Residue Thr326 is glycosylated (O-linked (GalNAc...) threonine). 7 disulfides stabilise this stretch: Cys340/Cys466, Cys378/Cys394, Cys386/Cys455, Cys417/Cys420, Cys480/Cys549, Cys512/Cys528, and Cys539/Cys570. The region spanning 354–594 is the Peptidase S1 domain; the sequence is VVGGLVALPG…YLDWIQEHTA (241 aa). The active-site Charge relay system is the His393. Asn414 is a glycosylation site (N-linked (GlcNAc...) asparagine). Asp442 serves as the catalytic Charge relay system. Residue Ser543 is the Charge relay system of the active site.

The protein belongs to the peptidase S1 family. As to quaternary structure, interacts with HRG; the interaction, which is enhanced in the presence of zinc ions and inhibited by heparin-binding, inhibits factor XII autoactivation and contact-initiated coagulation. O- and N-glycosylated.

The protein resides in the secreted. The enzyme catalyses Selective cleavage of Arg-|-Ile bonds in factor VII to form factor VIIa and factor XI to form factor XIa.. Activity is promoted in the presence of negatively charged surfaces. Functionally, factor XII is a serum glycoprotein that participates in the initiation of blood coagulation, fibrinolysis, and the generation of bradykinin and angiotensin. Prekallikrein is cleaved by factor XII to form kallikrein, which then cleaves factor XII first to alpha-factor XIIa and then trypsin cleaves it to beta-factor XIIa. Alpha-factor XIIa activates factor XI to factor XIa. This is Coagulation factor XII (F12) from Rattus norvegicus (Rat).